Reading from the N-terminus, the 793-residue chain is Transcription factor castor (793 aa).

Residues 44 to 53 (NEDISSSTSV) show a composition bias toward polar residues. Disordered stretches follow at residues 44–101 (NEDI…NLIA), 199–259 (VTST…HTNA), and 272–296 (LEST…DSSY). 3 stretches are compositionally biased toward low complexity: residues 54-68 (QQQQ…QQPQ), 81-98 (SSQN…PNSN), and 210-221 (ATPAPSAGATAG). Phosphothreonine is present on T211. A Phosphoserine modification is found at S215. The span at 233–242 (ESADDDEDDD) shows a compositional bias: acidic residues. Low complexity predominate over residues 245–254 (LSSLTSCSSS). Positions 273 to 284 (ESTTDSLDSPSM) are enriched in polar residues. The C2H2-type 1; atypical zinc finger occupies 377–402 (FHCHEEPCQGKILSKKDDIIRHLKWH). C2H2-type zinc fingers lie at residues 439 to 463 (YHCV…ANFH), 498 to 522 (YHCC…KTYH), and 556 to 580 (IHCV…KRKH). Residues 599 to 682 (EESSLDAMPQ…RLKVEDESSN (84 aa)) are disordered. Positions 608 to 629 (QQQQQQQQQQPTSLSQSQSSSS) are enriched in low complexity. Residues 630–644 (VCGGSNTSTPLSSLS) show a composition bias toward polar residues. The a.T hook DNA-binding region spans 650 to 662 (ARKRGRPPKKIQL).

As to expression, expressed in a specific subset of neuroblasts in the ventral nerve cord and the procephalic region in the embryo. Expressed in many, if not all, late delaminating NBs, and in early NBs, but only after they have undergone several rounds of ganglion mother cell-producing divisions.

The protein localises to the nucleus. Transcription factor that specifies expression of key genes in developing central nervous system (CNS). Essential for many, if not all, late developing neuroblastoma (NB) sublineages. Binds to the 5'-[CG]C[CT][CT]AAAAA[AT]-3' DNA sequence, like hb, suggesting that cas and hb act as a late regulators in early and late CNS NB sublineage, respectively. Acts by repressing expression of nub/pdm-1 and pdm2/pdm-2 POU genes, and restrict their pattern of expression in appropriate cells. Required for a full expression of vvl/drifter and acj6/I-POU; it is however unknown whether it directly activates these genes. Controls engrailed (en) expression in the ventral nerve cord. This chain is Transcription factor castor (cas), found in Drosophila melanogaster (Fruit fly).